Here is a 335-residue protein sequence, read N- to C-terminus: Beta-ketoacyl-[acyl-carrier-protein] synthase III (335 aa).

Active-site residues include Cys117 and His258. The ACP-binding stretch occupies residues 259–263; the sequence is QANQR. Asn288 is a catalytic residue.

It belongs to the thiolase-like superfamily. FabH family. In terms of assembly, homodimer.

The protein resides in the cytoplasm. The catalysed reaction is malonyl-[ACP] + acetyl-CoA + H(+) = 3-oxobutanoyl-[ACP] + CO2 + CoA. It participates in lipid metabolism; fatty acid biosynthesis. Functionally, catalyzes the condensation reaction of fatty acid synthesis by the addition to an acyl acceptor of two carbons from malonyl-ACP. Catalyzes the first condensation reaction which initiates fatty acid synthesis and may therefore play a role in governing the total rate of fatty acid production. Possesses both acetoacetyl-ACP synthase and acetyl transacylase activities. Its substrate specificity determines the biosynthesis of branched-chain and/or straight-chain of fatty acids. The polypeptide is Beta-ketoacyl-[acyl-carrier-protein] synthase III (Synechococcus elongatus (strain ATCC 33912 / PCC 7942 / FACHB-805) (Anacystis nidulans R2)).